The primary structure comprises 248 residues: UPF0246 protein RC0754 (248 aa).

Belongs to the UPF0246 family.

This is UPF0246 protein RC0754 from Rickettsia conorii (strain ATCC VR-613 / Malish 7).